The chain runs to 273 residues: MALPLPPGLTQNEVAFLAEMEMVTVVPRQRLDSIDLLGGKTPQLRPPHRAQLPLWLALLLKKQRRANIVPPAWMHPASLAEIIHRETKEDPEAFSPPPPPPSRALYSQPGTARRLNPSYLDDFTQTQQDSQQDPNSILSPPFLPSNVAESPAGYLPYHWLEVAEALLTHAGDDMPAPAGEVRSLLRDLVEVRAAKMRSSTSALEGFGDAYLTLRGVGAMELAENRAFLAGLVDGVRKIGASAEATRREEEEEARRGGDYGGDGDEDSDEDMGL.

Disordered regions lie at residues 88–110 (KEDPEAFSPPPPPPSRALYSQPG) and 240–273 (ASAEATRREEEEEARRGGDYGGDGDEDSDEDMGL). Positions 244–257 (ATRREEEEEARRGG) are enriched in basic and acidic residues. Over residues 261 to 273 (GDGDEDSDEDMGL) the composition is skewed to acidic residues.

Belongs to the GINS2/PSF2 family. As to quaternary structure, component of the GINS complex which is a heterotetramer of div-26/sld5, drc-1/psf1, drc-2/psf2 and drc-3/psf3.

Its subcellular location is the nucleus. Functionally, the GINS complex plays an essential role in the initiation of DNA replication. Has a role in chromosome segregation. This chain is DNA replication complex GINS protein psf2 (drc-2), found in Neurospora crassa (strain ATCC 24698 / 74-OR23-1A / CBS 708.71 / DSM 1257 / FGSC 987).